The following is an 809-amino-acid chain: Valine--tRNA ligase (809 aa).

The 'HIGH' region signature appears at 60–70; sequence PFTSGELHMGH. A 'KMSKS' region motif is present at residues 546–550; the sequence is RMSKS. Lys-549 is a binding site for ATP.

This sequence belongs to the class-I aminoacyl-tRNA synthetase family. ValS type 2 subfamily.

It is found in the cytoplasm. The catalysed reaction is tRNA(Val) + L-valine + ATP = L-valyl-tRNA(Val) + AMP + diphosphate. In terms of biological role, catalyzes the attachment of valine to tRNA(Val). As ValRS can inadvertently accommodate and process structurally similar amino acids such as threonine, to avoid such errors, it has a 'posttransfer' editing activity that hydrolyzes mischarged Thr-tRNA(Val) in a tRNA-dependent manner. The protein is Valine--tRNA ligase of Sulfurisphaera tokodaii (strain DSM 16993 / JCM 10545 / NBRC 100140 / 7) (Sulfolobus tokodaii).